Consider the following 354-residue polypeptide: Isocitrate dehydrogenase [NAD] regulatory subunit A, mitochondrial (354 aa).

5 residues coordinate substrate: S95, N97, R101, R111, and R132. Mg(2+) contacts are provided by D219, D243, and D247. Residues 276–282 and N289 each bind NADP(+); that span reads HGTAPDI.

It belongs to the isocitrate and isopropylmalate dehydrogenases family. As to quaternary structure, heterooligomer of catalytic and regulatory subunits. The cofactor is Mg(2+). Mn(2+) is required as a cofactor.

Its subcellular location is the mitochondrion. It carries out the reaction D-threo-isocitrate + NAD(+) = 2-oxoglutarate + CO2 + NADH. Performs an essential role in the oxidative function of the citric acid cycle. The protein is Isocitrate dehydrogenase [NAD] regulatory subunit A, mitochondrial (idhA) of Dictyostelium discoideum (Social amoeba).